We begin with the raw amino-acid sequence, 173 residues long: Protein tyrosine phosphatase type IVA 3 (173 aa).

Residues 8–161 form the Tyrosine-protein phosphatase domain; it reads APVEVSYKHM…YRPKQRLRFK (154 aa). A disulfide bridge links C49 with C104. The Proton donor role is filled by D72. C104 acts as the Phosphocysteine intermediate in catalysis. Residue R110 participates in substrate binding. C170 carries the cysteine methyl ester modification. C170 carries S-farnesyl cysteine lipidation. Residues 171-173 constitute a propeptide, removed in mature form; that stretch reads CVM.

The protein belongs to the protein-tyrosine phosphatase family. As to quaternary structure, interacts with tubulin. In terms of processing, farnesylated. Farnesylation is required for membrane targeting. As to expression, mainly expressed in cardiomyocytes and skeletal muscle; also found in pancreas. Consistently overexpressed in colon cancer metastasis.

The protein localises to the cell membrane. It is found in the early endosome. The catalysed reaction is O-phospho-L-tyrosyl-[protein] + H2O = L-tyrosyl-[protein] + phosphate. With respect to regulation, inhibited by sodium orthovanadate and peroxovanadium compounds, and by pentamidine. Its function is as follows. Protein tyrosine phosphatase which stimulates progression from G1 into S phase during mitosis. Enhances cell proliferation, cell motility and invasive activity, and promotes cancer metastasis. May be involved in the progression of cardiac hypertrophy by inhibiting intracellular calcium mobilization in response to angiotensin II. The polypeptide is Protein tyrosine phosphatase type IVA 3 (PTP4A3) (Homo sapiens (Human)).